A 123-amino-acid chain; its full sequence is Probable U6 snRNA-associated Sm-like protein LSm4 (123 aa).

The Sm domain maps to 3–76 (LPLSLLKTAQ…IKYLRIPETV (74 aa)). Basic and acidic residues predominate over residues 85 to 97 (NEVRRQQQREQSR). The tract at residues 85–123 (NEVRRQQQREQSRGRGGGRGGRGGHRGGGGNRGGRGGAR) is disordered. Positions 98–123 (GRGGGRGGRGGHRGGGGNRGGRGGAR) are enriched in gly residues.

The protein belongs to the snRNP Sm proteins family. Component of the precatalytic spliceosome (spliceosome B complex). Component of the U4/U6-U5 tri-snRNP complex, a building block of the precatalytic spliceosome (spliceosome B complex). LSM2, LSM3, LSM4, LSM5, LSM6, LSM7 and LSM8 form a heptameric, ring-shaped subcomplex (the LSM2-8 complex) that is part of the U4/U6-U5 tri-snRNP complex and the precatalytic spliceosome.

It localises to the nucleus. Plays a role in pre-mRNA splicing as component of the U4/U6-U5 tri-snRNP complex that is involved in spliceosome assembly, and as component of the precatalytic spliceosome (spliceosome B complex). The heptameric LSM2-8 complex binds specifically to the 3'-terminal U-tract of U6 snRNA. This chain is Probable U6 snRNA-associated Sm-like protein LSm4 (lsm-4), found in Caenorhabditis elegans.